The following is a 409-amino-acid chain: DNA polymerase IV 2 (409 aa).

One can recognise a UmuC domain in the interval 5 to 190 (IFMVDMESFF…LPIECLYGVG (186 aa)). Mg(2+) contacts are provided by Asp9 and Asp105. Residue Glu106 is part of the active site.

This sequence belongs to the DNA polymerase type-Y family. As to quaternary structure, monomer. Mg(2+) serves as cofactor.

Its subcellular location is the cytoplasm. The enzyme catalyses DNA(n) + a 2'-deoxyribonucleoside 5'-triphosphate = DNA(n+1) + diphosphate. Its function is as follows. Poorly processive, error-prone DNA polymerase involved in untargeted mutagenesis. Copies undamaged DNA at stalled replication forks, which arise in vivo from mismatched or misaligned primer ends. These misaligned primers can be extended by PolIV. Exhibits no 3'-5' exonuclease (proofreading) activity. May be involved in translesional synthesis, in conjunction with the beta clamp from PolIII. The polypeptide is DNA polymerase IV 2 (dinB2) (Halalkalibacterium halodurans (strain ATCC BAA-125 / DSM 18197 / FERM 7344 / JCM 9153 / C-125) (Bacillus halodurans)).